The chain runs to 275 residues: Adenylate kinase (275 aa).

An ATP-binding site is contributed by 54–59 (GAGKGT). Positions 74–103 (ATGDMLRSQVAKKTPLGREAKKIMDQGGLV) are NMP. AMP-binding positions include T75, R80, 101–103 (GLV), 130–133 (GFPR), and Q137. The LID stretch occupies residues 171 to 208 (GRLVHPASGRSYHRVFNPPKAEMKDDITGEPLVSRSDD). ATP-binding positions include R172 and 181–182 (SY). R205 and R216 together coordinate AMP. An ATP-binding site is contributed by Q244.

This sequence belongs to the adenylate kinase family. AK2 subfamily. Monomer.

The protein resides in the cytoplasm. The protein localises to the cytosol. It is found in the mitochondrion intermembrane space. It carries out the reaction AMP + ATP = 2 ADP. Catalyzes the reversible transfer of the terminal phosphate group between ATP and AMP. Plays an important role in cellular energy homeostasis and in adenine nucleotide metabolism. Adenylate kinase activity is critical for regulation of the phosphate utilization and the AMP de novo biosynthesis pathways. The chain is Adenylate kinase (adk1) from Sclerotinia sclerotiorum (strain ATCC 18683 / 1980 / Ss-1) (White mold).